The primary structure comprises 187 residues: UPF0398 protein SAB1311c (187 aa).

Belongs to the UPF0398 family.

This is UPF0398 protein SAB1311c from Staphylococcus aureus (strain bovine RF122 / ET3-1).